The chain runs to 227 residues: Cytochrome c oxidase subunit 2 (227 aa).

The Mitochondrial intermembrane segment spans residues 1–14; that stretch reads MAYPLQLGFQDAVS. The helical transmembrane segment at 15 to 45 threads the bilayer; it reads PIMEELLYFHDHTLMIVFLISSLVLYIITLM. Residues 46–59 are Mitochondrial matrix-facing; the sequence is LTTKLTHTNTMNAQ. A helical transmembrane segment spans residues 60-87; that stretch reads EVETVWTILPAIILILIALPSLRILYMM. Over 88–227 the chain is Mitochondrial intermembrane; it reads DEINNPSLTV…TFEKWTASLL (140 aa). The Cu cation site is built by His161, Cys196, Glu198, Cys200, His204, and Met207. Glu198 serves as a coordination point for Mg(2+).

It belongs to the cytochrome c oxidase subunit 2 family. Component of the cytochrome c oxidase (complex IV, CIV), a multisubunit enzyme composed of 14 subunits. The complex is composed of a catalytic core of 3 subunits MT-CO1, MT-CO2 and MT-CO3, encoded in the mitochondrial DNA, and 11 supernumerary subunits COX4I, COX5A, COX5B, COX6A, COX6B, COX6C, COX7A, COX7B, COX7C, COX8 and NDUFA4, which are encoded in the nuclear genome. The complex exists as a monomer or a dimer and forms supercomplexes (SCs) in the inner mitochondrial membrane with NADH-ubiquinone oxidoreductase (complex I, CI) and ubiquinol-cytochrome c oxidoreductase (cytochrome b-c1 complex, complex III, CIII), resulting in different assemblies (supercomplex SCI(1)III(2)IV(1) and megacomplex MCI(2)III(2)IV(2)). Found in a complex with TMEM177, COA6, COX18, COX20, SCO1 and SCO2. Interacts with TMEM177 in a COX20-dependent manner. Interacts with COX20. Interacts with COX16. The cofactor is Cu cation.

The protein resides in the mitochondrion inner membrane. The catalysed reaction is 4 Fe(II)-[cytochrome c] + O2 + 8 H(+)(in) = 4 Fe(III)-[cytochrome c] + 2 H2O + 4 H(+)(out). Its function is as follows. Component of the cytochrome c oxidase, the last enzyme in the mitochondrial electron transport chain which drives oxidative phosphorylation. The respiratory chain contains 3 multisubunit complexes succinate dehydrogenase (complex II, CII), ubiquinol-cytochrome c oxidoreductase (cytochrome b-c1 complex, complex III, CIII) and cytochrome c oxidase (complex IV, CIV), that cooperate to transfer electrons derived from NADH and succinate to molecular oxygen, creating an electrochemical gradient over the inner membrane that drives transmembrane transport and the ATP synthase. Cytochrome c oxidase is the component of the respiratory chain that catalyzes the reduction of oxygen to water. Electrons originating from reduced cytochrome c in the intermembrane space (IMS) are transferred via the dinuclear copper A center (CU(A)) of subunit 2 and heme A of subunit 1 to the active site in subunit 1, a binuclear center (BNC) formed by heme A3 and copper B (CU(B)). The BNC reduces molecular oxygen to 2 water molecules using 4 electrons from cytochrome c in the IMS and 4 protons from the mitochondrial matrix. The sequence is that of Cytochrome c oxidase subunit 2 (MT-CO2) from Hippopotamus amphibius (Hippopotamus).